Consider the following 311-residue polypeptide: Malate dehydrogenase (311 aa).

Residues 7-13 (GAAGGIG) and Asp-34 each bind NAD(+). Substrate contacts are provided by Arg-81 and Arg-87. NAD(+) contacts are provided by residues Asn-94 and 117 to 119 (ITN). 2 residues coordinate substrate: Asn-119 and Arg-153. The active-site Proton acceptor is His-177. NAD(+) is bound at residue Met-227.

It belongs to the LDH/MDH superfamily. MDH type 1 family. In terms of assembly, homodimer.

The catalysed reaction is (S)-malate + NAD(+) = oxaloacetate + NADH + H(+). Its function is as follows. Catalyzes the reversible oxidation of malate to oxaloacetate. In Aliivibrio fischeri (strain MJ11) (Vibrio fischeri), this protein is Malate dehydrogenase.